Consider the following 475-residue polypeptide: Cysteine--tRNA ligase (475 aa).

Cysteine 28 contributes to the Zn(2+) binding site. A 'HIGH' region motif is present at residues 30-40 (PTVYDYAHIGN). Residues cysteine 213, histidine 238, and glutamate 242 each coordinate Zn(2+). Positions 270-274 (KMSKS) match the 'KMSKS' region motif. Lysine 273 contacts ATP.

This sequence belongs to the class-I aminoacyl-tRNA synthetase family. Monomer. Zn(2+) serves as cofactor.

The protein resides in the cytoplasm. It catalyses the reaction tRNA(Cys) + L-cysteine + ATP = L-cysteinyl-tRNA(Cys) + AMP + diphosphate. The chain is Cysteine--tRNA ligase (cysS) from Chlamydia muridarum (strain MoPn / Nigg).